A 375-amino-acid chain; its full sequence is Heat-inducible transcription repressor HrcA (375 aa).

The span at 307 to 318 (ATDGATHAAASS) shows a compositional bias: low complexity. The disordered stretch occupies residues 307-331 (ATDGATHAAASSQTENQSGDDTRQA).

The protein belongs to the HrcA family.

Functionally, negative regulator of class I heat shock genes (grpE-dnaK-dnaJ and groELS operons). Prevents heat-shock induction of these operons. This is Heat-inducible transcription repressor HrcA from Bifidobacterium adolescentis (strain ATCC 15703 / DSM 20083 / NCTC 11814 / E194a).